Reading from the N-terminus, the 729-residue chain is MSGQPPPPPPQQQQQQQQLSPPPPAALAPVSGVVLPAPPAVSAGSSPAGSPGGGAGGEGLGAAAAALLLHPPPPPPPATAAPPPPPPPPPPPASAAAPASGPPAPPGLAAGPGPAGGAPTPALVAGSSAAAPFPHGDSALNEQEKELQRRLKRLYPAVDEQETPLPRSWSPKDKFSYIGLSQNNLRVHYKGHGKTPKDAASVRATHPIPAACGIYYFEVKIVSKGRDGYMGIGLSAQGVNMNRLPGWDKHSYGYHGDDGHSFCSSGTGQPYGPTFTTGDVIGCCVNLINNTCFYTKNGHSLGIAFTDLPPNLYPTVGLQTPGEVVDANFGQHPFVFDIEDYMREWRTKIQAQIDRFPIGDREGEWQTMIQKMVSSYLVHHGYCATAEAFARSTDQTVLEELASIKNRQRIQKLVLAGRMGEAIETTQQLYPSLLERNPNLLFTLKVRQFIEMVNGTDSEVRCLGGRSPKSQDSYPVSPRPFSSPSMSPSHGMNIHNLASGKGSTAHFSGFESCSNGVISNKAHQSYCHSNKHQSSNLNVPELNSINMSRSQQVNNFTSNDVDMETDHYSNGVGETSSNGFLNGSSKHDHEMEDCDTEMEVDSSQLRRQLCGGSQAAIERMIHFGRELQAMSEQLRRDCGKNTANKKMLKDAFSLLAYSDPWNSPVGNQLDPIQREPVCSALNSAILETHNLPKQPPLALAMGQATQCLGLMARSGIGSCAFATVEDYLH.

The segment covering 1-11 (MSGQPPPPPPQ) has biased composition (pro residues). The interval 1-137 (MSGQPPPPPP…SAAAPFPHGD (137 aa)) is disordered. Over residues 27–49 (LAPVSGVVLPAPPAVSAGSSPAG) the composition is skewed to low complexity. Positions 50–60 (SPGGGAGGEGL) are enriched in gly residues. Pro residues predominate over residues 70 to 93 (HPPPPPPPATAAPPPPPPPPPPPA). Over residues 107–126 (GLAAGPGPAGGAPTPALVAG) the composition is skewed to low complexity. Residues 147-334 (LQRRLKRLYP…VDANFGQHPF (188 aa)) form the B30.2/SPRY domain. The LisH domain maps to 365–397 (WQTMIQKMVSSYLVHHGYCATAEAFARSTDQTV). Positions 401–407 (LASIKNR) are interaction with CALB1. The CTLH domain occupies 403–460 (SIKNRQRIQKLVLAGRMGEAIETTQQLYPSLLERNPNLLFTLKVRQFIEMVNGTDSEV). K405 carries the post-translational modification N6-acetyllysine. The tract at residues 461–489 (RCLGGRSPKSQDSYPVSPRPFSSPSMSPS) is disordered. The span at 473-489 (SYPVSPRPFSSPSMSPS) shows a compositional bias: low complexity. 2 positions are modified to phosphoserine: S477 and S487. Residues 615–729 (AAIERMIHFG…AFATVEDYLH (115 aa)) form an interaction with FMR1 region.

Belongs to the RANBP9/10 family. As to quaternary structure, part of a complex consisting of RANBP9, MKLN1 and GID8. Identified in the CTLH complex that contains GID4, RANBP9 and/or RANBP10, MKLN1, MAEA, RMND5A (or alternatively its paralog RMND5B), GID8, ARMC8, WDR26 and YPEL5. Within this complex, MAEA, RMND5A (or alternatively its paralog RMND5B), GID8, WDR26, and RANBP9 and/or RANBP10 form the catalytic core, while GID4, MKLN1, ARMC8 and YPEL5 have ancillary roles. Interacts with GTP-bound Ran, AR, CDC2L1/p110C, CALB1, S100A7, USP11, MKLN1, SOS1 or SOS2, GID8, and FMR1. Interacts with the Dyrk kinases HIPK2, DYRK1A, and DYRK1B. Interacts with TP73 isoform Alpha but not with TP53. Interacts with the HGF receptor MET and the integrins ITGB1 and ITGB2, but not with ITGAL. Part of a complex consisting of RANBP9, RAN, DYRK1B and COPS5. Directly interacts with RANBP10. Interacts with YPEL5. Interacts with DDX4. Interacts with NGFR. Interacts with TEX19. Phosphorylated in response to stress. Can be phosphorylated by the cleaved p110 form of CDC2L1 (p110C). Post-translationally, ubiquitinated. Polyubiquitination targets the protein for rapid degradation via the ubiquitin system. Can be deubiquitinated by USP11. In terms of tissue distribution, ubiquitously expressed, with highest levels in testes, placenta, heart, and muscle, and lowest levels in lung. Within the brain, expressed predominantly by neurons in the gray matter of cortex, the granular layer of cerebellum and the Purkinje cells.

Its subcellular location is the cytoplasm. The protein resides in the nucleus. It is found in the cell membrane. Functionally, may act as scaffolding protein, and as adapter protein to couple membrane receptors to intracellular signaling pathways. Acts as a mediator of cell spreading and actin cytoskeleton rearrangement. Core component of the CTLH E3 ubiquitin-protein ligase complex that selectively accepts ubiquitin from UBE2H and mediates ubiquitination and subsequent proteasomal degradation of the transcription factor HBP1. May be involved in signaling of ITGB2/LFA-1 and other integrins. Enhances HGF-MET signaling by recruiting Sos and activating the Ras pathway. Enhances dihydrotestosterone-induced transactivation activity of AR, as well as dexamethasone-induced transactivation activity of NR3C1, but not affect estrogen-induced transactivation. Stabilizes TP73 isoform Alpha, probably by inhibiting its ubiquitination, and increases its proapoptotic activity. Inhibits the kinase activity of DYRK1A and DYRK1B. Inhibits FMR1 binding to RNA. This Homo sapiens (Human) protein is Ran-binding protein 9 (RANBP9).